The primary structure comprises 918 residues: Whirlin (918 aa).

The region spanning 141 to 224 (LVSLRRAKAH…LVLSVYSAGR (84 aa)) is the PDZ 1 domain. A disordered region spans residues 240–266 (PQGRSTSPPSSLPQPHGSTLRQREDDR). The region spanning 280–362 (KVNLVLGDGR…LILTVKDVGR (83 aa)) is the PDZ 2 domain. Disordered stretches follow at residues 387 to 407 (NSAG…GFYK), 503 to 538 (SMKA…TSTT), and 560 to 824 (EGTG…LEPT). Positions 522 to 538 (SYSDTGSSTGSHGTSTT) are enriched in low complexity. Over residues 563-572 (GETTQGSTNA) the composition is skewed to polar residues. Composition is skewed to pro residues over residues 591–600 (IKPPPPPPPL) and 638–649 (RSPPPGTAPTPG). The segment covering 654-672 (QDSPSSPIYASISHANPSS) has biased composition (polar residues). The residue at position 696 (Ser-696) is a Phosphoserine. Composition is skewed to polar residues over residues 754 to 773 (QTRT…TLSE) and 783 to 798 (EAST…SAKN). Residues 800 to 811 (NGKEQPRTERTA) are compositionally biased toward basic and acidic residues. Residues 827-910 (LVRVRKSAAT…TKERDYIDFL (84 aa)) form the PDZ 3 domain.

Forms homooligomers. Interacts (via C-terminal PDZ domain) with MYO15A; this interaction is necessary for localization of WHRN to stereocilia tips. Interacts (via C-terminal PDZ domain) with MPP1/p55. Interacts with LRRC4C/NGL1. Interacts with MYO7A. Interacts with RPGR. Interacts with EPS8. Interacts with CASK. Interacts with CIB2. Component of USH2 complex, composed of ADGRV1, PDZD7, USH2A and WHRN. Interacts (via PDZ domains) with PDZD7; the interaction is direct. Interacts (via N-terminal PDZ domain) with USH2A (via cytoplasmic region). Interacts with ADGRV1/MASS1 (via cytoplasmic region). Expressed in the retina. Colocalizes with RPGR in the photoreceptor connecting cilium, a thin bridge linking the cell body and the light-sensing outer segment (at protein level). Detected in the inner ear throughout development from embryonic day 12 to 20 days after birth. Displays a dynamic pattern of expression after birth, demonstrating an ordered appearance and fade-out across stereocilia rows. Isoforms 5, 6, 7 and 8 are not detected in the retina.

The protein resides in the cytoplasm. It localises to the cell projection. It is found in the stereocilium. Its subcellular location is the growth cone. The protein localises to the photoreceptor inner segment. The protein resides in the synapse. In terms of biological role, involved in hearing and vision as member of the USH2 complex. Necessary for elongation and maintenance of inner and outer hair cell stereocilia in the organ of Corti in the inner ear. Involved in the maintenance of the hair bundle ankle region, which connects stereocilia in cochlear hair cells of the inner ear. In retina photoreceptors, required for the maintenance of periciliary membrane complex that seems to play a role in regulating intracellular protein transport. The polypeptide is Whirlin (Mus musculus (Mouse)).